The primary structure comprises 160 residues: Cytochrome b6-f complex subunit 4 (160 aa).

The next 3 helical transmembrane spans lie at 36–56, 95–115, and 131–151; these read LLYIFPVVILGTIACVVGLAV, LLGIALQTLIPLGLMILPFIE, and VVFLFGTFLTIYLGIGACLPI.

It belongs to the cytochrome b family. PetD subfamily. As to quaternary structure, the 4 large subunits of the cytochrome b6-f complex are cytochrome b6, subunit IV (17 kDa polypeptide, PetD), cytochrome f and the Rieske protein, while the 4 small subunits are PetG, PetL, PetM and PetN. The complex functions as a dimer.

It localises to the cellular thylakoid membrane. Component of the cytochrome b6-f complex, which mediates electron transfer between photosystem II (PSII) and photosystem I (PSI), cyclic electron flow around PSI, and state transitions. This is Cytochrome b6-f complex subunit 4 from Prochlorococcus marinus (strain MIT 9515).